Consider the following 276-residue polypeptide: uncharacterized protein (276 aa).

It to E.coli YjfZ.

This is an uncharacterized protein from Escherichia coli (strain K12).